Consider the following 98-residue polypeptide: Aspartyl/glutamyl-tRNA(Asn/Gln) amidotransferase subunit C (98 aa).

The protein belongs to the GatC family. Heterotrimer of A, B and C subunits.

It carries out the reaction L-glutamyl-tRNA(Gln) + L-glutamine + ATP + H2O = L-glutaminyl-tRNA(Gln) + L-glutamate + ADP + phosphate + H(+). It catalyses the reaction L-aspartyl-tRNA(Asn) + L-glutamine + ATP + H2O = L-asparaginyl-tRNA(Asn) + L-glutamate + ADP + phosphate + 2 H(+). Allows the formation of correctly charged Asn-tRNA(Asn) or Gln-tRNA(Gln) through the transamidation of misacylated Asp-tRNA(Asn) or Glu-tRNA(Gln) in organisms which lack either or both of asparaginyl-tRNA or glutaminyl-tRNA synthetases. The reaction takes place in the presence of glutamine and ATP through an activated phospho-Asp-tRNA(Asn) or phospho-Glu-tRNA(Gln). The protein is Aspartyl/glutamyl-tRNA(Asn/Gln) amidotransferase subunit C of Bifidobacterium adolescentis (strain ATCC 15703 / DSM 20083 / NCTC 11814 / E194a).